The sequence spans 325 residues: MDRVLVASYPINHLIRPHSFRIDYCWSTCFTSRLNSGKERQKLSSRWRWRSMASDSTDSSSSSSFAPSVESDPSDKTSASFCIIEGPETVQDFAKMELQEIQENIRSHRNKIFLHMEEVRRLRIQQRIKNAELGISKEERENELPNFPSFIPFLPPLSSENLKLYYVTCYSLIAGIILFGGLLAPTLELKLGLGGTSYEDFIRSVHLPMQLSQVDPIVASFSGGAVGVISALMVVEVNNVKQQEHKRCKYCLGTGYLACARCSNTGALVLIEPVSTLNGEHQPLSLPKTERCQNCSGSGKVMCPTCLCTGMAMASEHDPRIDPFD.

A chloroplast-targeting transit peptide spans Met-1 to Ser-54. The span at Ala-53–Ser-71 shows a compositional bias: low complexity. A disordered region spans residues Ala-53–Thr-77. 2 helical membrane-spanning segments follow: residues Leu-164–Ala-184 and Ile-217–Val-237. Residues Val-226–His-317 form a CR-type-like region. The CXXCXGXG motif repeat unit spans residues Cys-248–Gly-255. A CXXCXXXG motif repeat occupies Cys-259 to Gly-266. The stretch at Cys-292–Gly-299 is one CXXCXGXG motif repeat. One copy of the CXXCXXXG motif repeat lies at Cys-303–Gly-310.

Belongs to the orange-like family.

The protein resides in the plastid. The protein localises to the chloroplast membrane. Triggers accumulation of carotenoids, mainly beta-carotene, in fruit flesh. In Cucumis melo (Muskmelon), this protein is Protein ORANGE-ORANGE, chloroplastic.